The primary structure comprises 173 residues: Crossover junction endodeoxyribonuclease RuvC (173 aa).

Residues Asp-8, Glu-67, and Asp-139 contribute to the active site. Mg(2+) contacts are provided by Asp-8, Glu-67, and Asp-139.

Belongs to the RuvC family. As to quaternary structure, homodimer which binds Holliday junction (HJ) DNA. The HJ becomes 2-fold symmetrical on binding to RuvC with unstacked arms; it has a different conformation from HJ DNA in complex with RuvA. In the full resolvosome a probable DNA-RuvA(4)-RuvB(12)-RuvC(2) complex forms which resolves the HJ. Mg(2+) serves as cofactor.

The protein resides in the cytoplasm. It catalyses the reaction Endonucleolytic cleavage at a junction such as a reciprocal single-stranded crossover between two homologous DNA duplexes (Holliday junction).. The RuvA-RuvB-RuvC complex processes Holliday junction (HJ) DNA during genetic recombination and DNA repair. Endonuclease that resolves HJ intermediates. Cleaves cruciform DNA by making single-stranded nicks across the HJ at symmetrical positions within the homologous arms, yielding a 5'-phosphate and a 3'-hydroxyl group; requires a central core of homology in the junction. The consensus cleavage sequence is 5'-(A/T)TT(C/G)-3'. Cleavage occurs on the 3'-side of the TT dinucleotide at the point of strand exchange. HJ branch migration catalyzed by RuvA-RuvB allows RuvC to scan DNA until it finds its consensus sequence, where it cleaves and resolves the cruciform DNA. The chain is Crossover junction endodeoxyribonuclease RuvC from Citrobacter koseri (strain ATCC BAA-895 / CDC 4225-83 / SGSC4696).